Consider the following 574-residue polypeptide: K(+)/H(+) antiporter NhaP2 (574 aa).

Helical transmembrane passes span 6–26 (INSFFLIGALLAAVSVLLSPM), 30–50 (LGIPILLIFLAVGILAGEDGL), 58–78 (YSTAYLVSNLALAIILLDGGM), 87–107 (VALWPALSLATFGVAITTSIT), 109–129 (LMAAWLFDLHWLQGLLVGAIV), 173–193 (IAILANVDTELSVSFMLVSFI), 196–216 (FGLGICLGLGGGWLLWKLVNL), 219–239 (LAEGLYSILVLSGGLIIYAVS), 242–262 (LGGSGILSIYLVGLFLGNKPT), 271–291 (VLDGMTWVSQIGMFLVLGLLL), 299–319 (ILLPGFALAFGMILFARPLAV), 335–355 (WFISWVGLRGAVPIILAVFPM), and 359–379 (LPGAQLYFNLAFFVVLVSLLI). The region spanning 405–486 (SGVEIYPSSE…LDALSHLFSQ (82 aa)) is the RCK C-terminal domain.

It belongs to the monovalent cation:proton antiporter 1 (CPA1) transporter (TC 2.A.36) family. NhaP2 subfamily.

It localises to the cell inner membrane. It catalyses the reaction K(+)(in) + H(+)(out) = K(+)(out) + H(+)(in). Functionally, k(+)/H(+) antiporter that extrudes potassium in exchange for external protons and maintains the internal concentration of potassium under toxic levels. The chain is K(+)/H(+) antiporter NhaP2 from Shewanella sp. (strain W3-18-1).